The primary structure comprises 510 residues: 2,3-bisphosphoglycerate-independent phosphoglycerate mutase (510 aa).

Aspartate 11 and serine 61 together coordinate Mn(2+). Serine 61 (phosphoserine intermediate) is an active-site residue. Substrate contacts are provided by residues histidine 124, 154 to 155, arginine 185, arginine 191, 260 to 263, and lysine 333; these read RD and RPDR. The Mn(2+) site is built by aspartate 398, histidine 402, aspartate 439, histidine 440, and histidine 457.

It belongs to the BPG-independent phosphoglycerate mutase family. As to quaternary structure, monomer. Mn(2+) serves as cofactor.

The catalysed reaction is (2R)-2-phosphoglycerate = (2R)-3-phosphoglycerate. It functions in the pathway carbohydrate degradation; glycolysis; pyruvate from D-glyceraldehyde 3-phosphate: step 3/5. Functionally, catalyzes the interconversion of 2-phosphoglycerate and 3-phosphoglycerate. The chain is 2,3-bisphosphoglycerate-independent phosphoglycerate mutase from Mycoplasma mobile (strain ATCC 43663 / 163K / NCTC 11711) (Mesomycoplasma mobile).